Consider the following 316-residue polypeptide: CRISPR-associated endonuclease Cas1 (316 aa).

Positions 143, 206, and 221 each coordinate Mn(2+).

Belongs to the CRISPR-associated endonuclease Cas1 family. As to quaternary structure, homodimer, forms a heterotetramer with a Cas2 homodimer. Requires Mg(2+) as cofactor. Mn(2+) is required as a cofactor.

Its function is as follows. CRISPR (clustered regularly interspaced short palindromic repeat), is an adaptive immune system that provides protection against mobile genetic elements (viruses, transposable elements and conjugative plasmids). CRISPR clusters contain spacers, sequences complementary to antecedent mobile elements, and target invading nucleic acids. CRISPR clusters are transcribed and processed into CRISPR RNA (crRNA). Acts as a dsDNA endonuclease. Involved in the integration of spacer DNA into the CRISPR cassette. This is CRISPR-associated endonuclease Cas1 from Aquifex aeolicus (strain VF5).